Here is a 259-residue protein sequence, read N- to C-terminus: 3-deoxy-manno-octulosonate cytidylyltransferase 1 (259 aa).

This sequence belongs to the KdsB family.

The protein localises to the cytoplasm. The catalysed reaction is 3-deoxy-alpha-D-manno-oct-2-ulosonate + CTP = CMP-3-deoxy-beta-D-manno-octulosonate + diphosphate. Its pathway is nucleotide-sugar biosynthesis; CMP-3-deoxy-D-manno-octulosonate biosynthesis; CMP-3-deoxy-D-manno-octulosonate from 3-deoxy-D-manno-octulosonate and CTP: step 1/1. It participates in bacterial outer membrane biogenesis; lipopolysaccharide biosynthesis. Its function is as follows. Activates KDO (a required 8-carbon sugar) for incorporation into bacterial lipopolysaccharide in Gram-negative bacteria. This chain is 3-deoxy-manno-octulosonate cytidylyltransferase 1, found in Hydrogenovibrio crunogenus (strain DSM 25203 / XCL-2) (Thiomicrospira crunogena).